Consider the following 248-residue polypeptide: Something about silencing protein 5 (248 aa).

The 139-residue stretch at 1–139 (MDHSIEVTFR…SELSKYFDLP (139 aa)) folds into the YEATS domain. Position 144 is a phosphoserine (Ser144). Positions 223–248 (TKQERTNFGSDAIHKDEPVKAHNKLK) are disordered.

As to quaternary structure, component of the SAS complex, at least composed of SAS2, SAS4 and SAS5. These three proteins constitute the core of the complex, and are sufficient to acetylate histones.

Its subcellular location is the nucleus. Functionally, component of the SAS complex, a multiprotein complex that acetylates 'Lys-16' of histone H4 and 'Lys-14' of histone H3. The SAS complex is however unable to acetylate nucleosomal histones. The complex is involved in transcriptional silencing at telomeres and at HML locus. Also involved in rDNA silencing. In the complex, SAS5 is required for maximal histone acetyltransferase (HAT) activity of the complex, suggesting that it may be required to stabilize the complex or help in substrate recognition. In Saccharomyces cerevisiae (strain ATCC 204508 / S288c) (Baker's yeast), this protein is Something about silencing protein 5 (SAS5).